Here is a 156-residue protein sequence, read N- to C-terminus: MQIIEGKLQLQGNERVAILTSRFNHIITDRLKEGAMDCFKRHGGDEDLLDIVLVPGAYELPLILDKLLESGKYDGVCVLGAIIRGGTPHFDYVSAEATKGIASAMLKYSMPVSFGVLTTDNIEQAIERAGSKAGNKGFEAMSTLIELLSLCQTLKG.

5-amino-6-(D-ribitylamino)uracil-binding positions include phenylalanine 23, 57–59 (AYE), and 81–83 (AII). 86–87 (GT) contacts (2S)-2-hydroxy-3-oxobutyl phosphate. Histidine 89 functions as the Proton donor in the catalytic mechanism. A 5-amino-6-(D-ribitylamino)uracil-binding site is contributed by phenylalanine 114. Arginine 128 serves as a coordination point for (2S)-2-hydroxy-3-oxobutyl phosphate.

This sequence belongs to the DMRL synthase family.

The enzyme catalyses (2S)-2-hydroxy-3-oxobutyl phosphate + 5-amino-6-(D-ribitylamino)uracil = 6,7-dimethyl-8-(1-D-ribityl)lumazine + phosphate + 2 H2O + H(+). It functions in the pathway cofactor biosynthesis; riboflavin biosynthesis; riboflavin from 2-hydroxy-3-oxobutyl phosphate and 5-amino-6-(D-ribitylamino)uracil: step 1/2. Catalyzes the formation of 6,7-dimethyl-8-ribityllumazine by condensation of 5-amino-6-(D-ribitylamino)uracil with 3,4-dihydroxy-2-butanone 4-phosphate. This is the penultimate step in the biosynthesis of riboflavin. In Helicobacter pylori (strain HPAG1), this protein is 6,7-dimethyl-8-ribityllumazine synthase.